We begin with the raw amino-acid sequence, 474 residues long: Protein nucleotidyltransferase YdiU (474 aa).

ATP-binding residues include G89, G91, R92, K112, D124, G125, R175, and R182. The Proton acceptor role is filled by D256. Mg(2+) contacts are provided by N257 and D266. D266 provides a ligand contact to ATP.

This sequence belongs to the SELO family. It depends on Mg(2+) as a cofactor. Requires Mn(2+) as cofactor.

The catalysed reaction is L-seryl-[protein] + ATP = 3-O-(5'-adenylyl)-L-seryl-[protein] + diphosphate. It carries out the reaction L-threonyl-[protein] + ATP = 3-O-(5'-adenylyl)-L-threonyl-[protein] + diphosphate. It catalyses the reaction L-tyrosyl-[protein] + ATP = O-(5'-adenylyl)-L-tyrosyl-[protein] + diphosphate. The enzyme catalyses L-histidyl-[protein] + UTP = N(tele)-(5'-uridylyl)-L-histidyl-[protein] + diphosphate. The catalysed reaction is L-seryl-[protein] + UTP = O-(5'-uridylyl)-L-seryl-[protein] + diphosphate. It carries out the reaction L-tyrosyl-[protein] + UTP = O-(5'-uridylyl)-L-tyrosyl-[protein] + diphosphate. Its function is as follows. Nucleotidyltransferase involved in the post-translational modification of proteins. It can catalyze the addition of adenosine monophosphate (AMP) or uridine monophosphate (UMP) to a protein, resulting in modifications known as AMPylation and UMPylation. In Corynebacterium glutamicum (strain ATCC 13032 / DSM 20300 / JCM 1318 / BCRC 11384 / CCUG 27702 / LMG 3730 / NBRC 12168 / NCIMB 10025 / NRRL B-2784 / 534), this protein is Protein nucleotidyltransferase YdiU.